The chain runs to 300 residues: Putative S-adenosyl-L-methionine-dependent methyltransferase MAB_4328c (300 aa).

Residues aspartate 126 and 155–156 contribute to the S-adenosyl-L-methionine site; that span reads DL.

Belongs to the UPF0677 family.

In terms of biological role, exhibits S-adenosyl-L-methionine-dependent methyltransferase activity. The sequence is that of Putative S-adenosyl-L-methionine-dependent methyltransferase MAB_4328c from Mycobacteroides abscessus (strain ATCC 19977 / DSM 44196 / CCUG 20993 / CIP 104536 / JCM 13569 / NCTC 13031 / TMC 1543 / L948) (Mycobacterium abscessus).